The following is a 248-amino-acid chain: Small ribosomal subunit protein uS3 (248 aa).

The region spanning 39 to 108 (IRKLVSQKLA…TVAVNVAEIP (70 aa)) is the KH type-2 domain. The tract at residues 212–248 (KTETLARPPRKSDERRREDGERPSRRRPTARRRPGGE) is disordered. Positions 221–234 (RKSDERRREDGERP) are enriched in basic and acidic residues. Basic residues predominate over residues 235–248 (SRRRPTARRRPGGE).

It belongs to the universal ribosomal protein uS3 family. As to quaternary structure, part of the 30S ribosomal subunit. Forms a tight complex with proteins S10 and S14.

Functionally, binds the lower part of the 30S subunit head. Binds mRNA in the 70S ribosome, positioning it for translation. The protein is Small ribosomal subunit protein uS3 of Deinococcus geothermalis (strain DSM 11300 / CIP 105573 / AG-3a).